The following is a 577-amino-acid chain: DNA-directed RNA polymerase subunit alpha (577 aa).

The segment at 1-461 (MIKIIIKETF…QLFLPLQQIR (461 aa)) is alpha N-terminal domain (alpha-NTD). The segment at 510–577 (FDHRLLELDI…ALQLMKLTLK (68 aa)) is alpha C-terminal domain (alpha-CTD).

The protein belongs to the RNA polymerase alpha chain family. In plastids the minimal PEP RNA polymerase catalytic core is composed of four subunits: alpha, beta, beta', and beta''. When a (nuclear-encoded) sigma factor is associated with the core the holoenzyme is formed, which can initiate transcription.

It is found in the plastid. It localises to the chloroplast. It carries out the reaction RNA(n) + a ribonucleoside 5'-triphosphate = RNA(n+1) + diphosphate. In terms of biological role, DNA-dependent RNA polymerase catalyzes the transcription of DNA into RNA using the four ribonucleoside triphosphates as substrates. This is DNA-directed RNA polymerase subunit alpha from Tupiella akineta (Green alga).